The chain runs to 185 residues: Adenine phosphoribosyltransferase (185 aa).

It belongs to the purine/pyrimidine phosphoribosyltransferase family. In terms of assembly, homodimer.

It is found in the cytoplasm. It catalyses the reaction AMP + diphosphate = 5-phospho-alpha-D-ribose 1-diphosphate + adenine. The protein operates within purine metabolism; AMP biosynthesis via salvage pathway; AMP from adenine: step 1/1. Catalyzes a salvage reaction resulting in the formation of AMP, that is energically less costly than de novo synthesis. The protein is Adenine phosphoribosyltransferase of Pectobacterium atrosepticum (strain SCRI 1043 / ATCC BAA-672) (Erwinia carotovora subsp. atroseptica).